Here is a 379-residue protein sequence, read N- to C-terminus: Palmitoyltransferase swf1 (379 aa).

Residues 1 to 4 (MCYY) are Lumenal-facing. The helical transmembrane segment at 5–25 (ISILIYWGADCRTVGTGPVLM) threads the bilayer. The Cytoplasmic segment spans residues 26-48 (YCTKTIRSYFRCRHPFFSSINSS). The helical transmembrane segment at 49–69 (QIFFLSLLIAGECMFIPSAWP) threads the bilayer. Topologically, residues 70–76 (RVSTFHR) are lumenal. A helical membrane pass occupies residues 77–97 (LFIPALALLPYVFLYASVVTK). Residues 98-166 (SYITHENHED…TNCVGRNNYH (69 aa)) are Cytoplasmic-facing. The DHHC domain maps to 123 to 173 (HRCRTCDFLKPARSKHCSFCKACVSRHDHHCVWLTNCVGRNNYHYFLSLLL). Cysteine 153 functions as the S-palmitoyl cysteine intermediate in the catalytic mechanism. Residues 167-187 (YFLSLLLSLSLMLAYGSWLGF) traverse the membrane as a helical segment. The Lumenal portion of the chain corresponds to 188–227 (SLVSQTLEGLIPSSSPLRSKSQDWTTWLNVWAIAIASDIR). Residues 228-248 (VGAVAMLTAMTAPLAMAFLLY) traverse the membrane as a helical segment. Residues 249–379 (HTYLIWAGMT…FHMPIRRCVR (131 aa)) lie on the Cytoplasmic side of the membrane.

This sequence belongs to the DHHC palmitoyltransferase family. SWF1 subfamily.

It localises to the endoplasmic reticulum membrane. It carries out the reaction L-cysteinyl-[protein] + hexadecanoyl-CoA = S-hexadecanoyl-L-cysteinyl-[protein] + CoA. Functionally, palmitoyltransferase that targets several endosomal SNAREs. Palmitoylates the SNAREs at cysteine residues close to the cytoplasmic end of their transmembrane domain. May have a role in the cellular quality control of transmembrane domain-containing proteins. The protein is Palmitoyltransferase swf1 (swf1) of Aspergillus fumigatus (strain ATCC MYA-4609 / CBS 101355 / FGSC A1100 / Af293) (Neosartorya fumigata).